A 620-amino-acid chain; its full sequence is 1-deoxy-D-xylulose-5-phosphate synthase (620 aa).

Thiamine diphosphate contacts are provided by residues His-80 and 121–123 (GHS). Asp-152 is a binding site for Mg(2+). Thiamine diphosphate-binding positions include 153–154 (GA), Asn-181, Tyr-288, and Glu-370. Asn-181 is a Mg(2+) binding site.

The protein belongs to the transketolase family. DXPS subfamily. As to quaternary structure, homodimer. The cofactor is Mg(2+). Requires thiamine diphosphate as cofactor.

It catalyses the reaction D-glyceraldehyde 3-phosphate + pyruvate + H(+) = 1-deoxy-D-xylulose 5-phosphate + CO2. The protein operates within metabolic intermediate biosynthesis; 1-deoxy-D-xylulose 5-phosphate biosynthesis; 1-deoxy-D-xylulose 5-phosphate from D-glyceraldehyde 3-phosphate and pyruvate: step 1/1. In terms of biological role, catalyzes the acyloin condensation reaction between C atoms 2 and 3 of pyruvate and glyceraldehyde 3-phosphate to yield 1-deoxy-D-xylulose-5-phosphate (DXP). This chain is 1-deoxy-D-xylulose-5-phosphate synthase, found in Shigella dysenteriae serotype 1 (strain Sd197).